We begin with the raw amino-acid sequence, 142 residues long: MSMKYLMLLFAAMIIRSFADSGNAIETTLPEITNATTDIPAIRLCGPEGDGYCLHGDCIHARDIDGMYCRCSHGYTGIRCQHVVLVDYQRSENPNTTTSYIPSPGIMLVLVGIIIIITCCLLSVYRFTRRTNKLPLQDMVVP.

The signal sequence occupies residues 1–18 (MSMKYLMLLFAAMIIRSF). Over 19 to 100 (ADSGNAIETT…SENPNTTTSY (82 aa)) the chain is Extracellular. Asn-34 carries an N-linked (GlcNAc...) asparagine; by host glycan. The EGF-like domain maps to 41 to 81 (AIRLCGPEGDGYCLHGDCIHARDIDGMYCRCSHGYTGIRCQ). 3 cysteine pairs are disulfide-bonded: Cys-45/Cys-58, Cys-53/Cys-69, and Cys-71/Cys-80. Asn-95 carries an N-linked (GlcNAc...) asparagine; by host glycan. The chain crosses the membrane as a helical span at residues 101–121 (IPSPGIMLVLVGIIIIITCCL). The Cytoplasmic portion of the chain corresponds to 122–142 (LSVYRFTRRTNKLPLQDMVVP).

It belongs to the orthopoxvirus OPG019 family. As to quaternary structure, vaccinia growth factor interacts with host EGFR and promotes EGFR dimerization.

The protein localises to the host membrane. The protein resides in the secreted. Its function is as follows. Stimulates cellular proliferation (hyperplasia)and mobility around infected cells to promote rapid and efficient spread of infection. This effect is beneficial for virus replication in vivo, because poxviruses replicate possibly better in proliferating cells than in quiescent cells. Acts by binding host EGFR, inducing its dimerization, autophosphorylation and leading to activation of several cellular pathways regulating cell proliferation or cell survival. The activation by host EGFR of mitogen activated protein kinases (MAPK) and extracellular-signal regulated kinases (ERK) are essential for the positive effect of vaccinia growth factor on poxvirus virulence in vivo. The chain is Pro-vaccinia growth factor (OPG019) from Vaccinia virus (strain Copenhagen) (VACV).